Consider the following 92-residue polypeptide: C-C motif chemokine 3 (92 aa).

Residues 1–26 (MQVSTAALAVLLCTVALCNRISATFA) form the signal peptide. Intrachain disulfides connect Cys-33–Cys-57 and Cys-34–Cys-73.

The protein belongs to the intercrine beta (chemokine CC) family. Self-associates. Also heterodimer of MIP-1-alpha(4-69) and MIP-1-beta(3-69). Interacts with CCR1.

Its subcellular location is the secreted. Monokine with inflammatory and chemokinetic properties. Binds to CCR1, CCR4 and CCR5. One of the major HIV-suppressive factors produced by CD8+ T-cells. Recombinant MIP-1-alpha induces a dose-dependent inhibition of different strains of HIV-1, HIV-2, and simian immunodeficiency virus (SIV). The sequence is that of C-C motif chemokine 3 (CCL3) from Macaca mulatta (Rhesus macaque).